Consider the following 182-residue polypeptide: Peptidyl-tRNA hydrolase (182 aa).

Tyr14 is a tRNA binding site. His19 (proton acceptor) is an active-site residue. 3 residues coordinate tRNA: Phe60, Asn62, and Asn106.

The protein belongs to the PTH family. Monomer.

Its subcellular location is the cytoplasm. It carries out the reaction an N-acyl-L-alpha-aminoacyl-tRNA + H2O = an N-acyl-L-amino acid + a tRNA + H(+). Hydrolyzes ribosome-free peptidyl-tRNAs (with 1 or more amino acids incorporated), which drop off the ribosome during protein synthesis, or as a result of ribosome stalling. Its function is as follows. Catalyzes the release of premature peptidyl moieties from peptidyl-tRNA molecules trapped in stalled 50S ribosomal subunits, and thus maintains levels of free tRNAs and 50S ribosomes. This Campylobacter concisus (strain 13826) protein is Peptidyl-tRNA hydrolase.